A 459-amino-acid chain; its full sequence is Proton-coupled folate transporter (459 aa).

At M1 the chain carries N-acetylmethionine. Residues 1–25 are Cytoplasmic-facing; the sequence is MEGRANSPGEPRAWPTRSVLCRGCV. A helical membrane pass occupies residues 26–44; that stretch reads EPLVFLANFALVLQGPVTT. The Extracellular segment spans residues 45–82; the sequence is QYLWHRFSADLGYNGTRHRDSCSNHSVDPIAQEVETLT. N58 and N68 each carry an N-linked (GlcNAc...) asparagine glycan. C66 and C298 form a disulfide bridge. Residues 83–108 form a helical membrane-spanning segment; sequence SHWTLYMNVGGFLVGLFSSTLLGAWS. Over 109–112 the chain is Cytoplasmic; the sequence is DCVG. Residues 113-135 form a helical membrane-spanning segment; that stretch reads RRPLLVLASLGLLLQTVLSIFVV. Topologically, residues 136 to 140 are extracellular; the sequence is QLHLH. Residues 141–154 form a helical membrane-spanning segment; that stretch reads IGYLVLGRILCALL. Residues 155–177 are Cytoplasmic-facing; that stretch reads GDFSGLLAASFASVADVSSSRTR. Positions 156 and 185 each coordinate H(+). The helical transmembrane segment at 178–203 threads the bilayer; the sequence is TIRMALLEACIGVAGMLASFIGGFLL. The Extracellular segment spans residues 204–208; it reads QEQVY. Residues 209 to 227 form a helical membrane-spanning segment; that stretch reads VNPFWLALAVLTVMTLYAA. The Cytoplasmic segment spans residues 228 to 266; it reads FCFGETVKERTPTRLFTLRHHRSVIQLYVTQAPEKSRKH. A helical transmembrane segment spans residues 267 to 289; that stretch reads LALYSLAIFVMITVHLGAQDILT. A H(+)-binding site is contributed by H281. Residues 290–302 lie on the Extracellular side of the membrane; the sequence is LYELSAPLCWDSR. The chain crosses the membrane as a helical span at residues 303–325; that stretch reads LISYGSAAQQLPYLTSLLGLRLL. The Cytoplasmic segment spans residues 326–331; it reads QYCLAD. The helical transmembrane segment at 332-351 threads the bilayer; sequence TWVAEIGLVFNILGMMVFAF. Residues 352–355 are Extracellular-facing; that stretch reads ATIT. Residues 356-376 traverse the membrane as a helical segment; the sequence is PLMFTGYGLLFLSLVVTPIIR. Residues 377 to 388 lie on the Cytoplasmic side of the membrane; that stretch reads AKLSRLVRQSEQ. A helical transmembrane segment spans residues 389-414; the sequence is GALFSALACVNGLAMLMASGIFNSLY. The Extracellular portion of the chain corresponds to 415 to 422; that stretch reads PATLNLMK. A helical membrane pass occupies residues 423–441; sequence GFPFLLAAGLLFIPAILMG. Over 442–459 the chain is Cytoplasmic; that stretch reads ILERDNHCPEFQEFSQSP. Residue S458 is modified to Phosphoserine.

This sequence belongs to the major facilitator superfamily. SLC46A family. In terms of assembly, monomer. In terms of tissue distribution, expressed in retina and retinal pigment epithelium.

The protein resides in the cell membrane. It localises to the apical cell membrane. Its subcellular location is the basolateral cell membrane. The protein localises to the endosome membrane. It is found in the cytoplasm. The catalysed reaction is folate(in) + H(+)(in) = folate(out) + H(+)(out). The enzyme catalyses (6S)-5-methyl-5,6,7,8-tetrahydrofolate(in) + H(+)(in) = (6S)-5-methyl-5,6,7,8-tetrahydrofolate(out) + H(+)(out). It catalyses the reaction methotrexate(in) + H(+)(in) = methotrexate(out) + H(+)(out). It carries out the reaction pemetrexed(in) + H(+)(in) = pemetrexed(out) + H(+)(out). Functionally, proton-coupled folate symporter that mediates folate absorption using an H(+) gradient as a driving force. Involved in the intestinal absorption of folates at the brush-border membrane of the proximal jejunum, and the transport from blood to cerebrospinal fluid across the choroid plexus. Functions at acidic pH via alternate outward- and inward-open conformation states. Protonation of residues in the outward open state primes the protein for transport. Binding of folate promotes breaking of salt bridge network and subsequent closure of the extracellular gate, leading to the inward-open state and release of protons and folate. Also able to transport antifolate drugs, such as methotrexate and pemetrexed. Involved in FOLR1-mediated endocytosis by serving as a route of export of folates from acidified endosomes. Also acts as a lower-affinity, pH-independent heme carrier protein and constitutes the main importer of heme in the intestine. Imports heme in the retina and retinal pigment epithelium, in neurons of the hippocampus, in hepatocytes and in the renal epithelial cells. Hence, participates in the trafficking of heme and increases intracellular iron content. In Bos taurus (Bovine), this protein is Proton-coupled folate transporter.